A 788-amino-acid chain; its full sequence is Protein TRS1 (788 aa).

2 disordered regions span residues 1-82 and 610-663; these read MAQR…NFWH and IHKK…PSRV. Positions 16–25 are enriched in gly residues; that stretch reads RGRGAGGPSG. The segment covering 26–56 has biased composition (low complexity); sequence VGSSPPSSCVPMGATSTAGTGASAAPTATPG. The segment at 74–248 is RNA-binding; that stretch reads SGNNSNFWHG…HGAGEVVRLY (175 aa). The segment covering 651–660 has biased composition (basic and acidic residues); the sequence is LRRDDEDWKP. An interaction with host EIF2AK2/PKR region spans residues 672–788; sequence LDETFWVLGS…NVATHYHYNA (117 aa).

This sequence belongs to the herpesviridae US22 family. Interacts with host EIF2AK2/PKR; this interaction retains EIF2AK2 to the host nucleus and prevents its activation. Interaction (via N-terminus) with host BECN1; this interaction inhibits host autophagy. Interacts with the viral DNA polymerase accessory subunit UL44. Interacts with host HSPA5.

The protein resides in the virion. It localises to the host cytoplasm. Its subcellular location is the host nucleus. Inhibits the establishment of the antiviral state in the infected cell. Prevents the phosphorylation of the host eukaryotic translation initiation factor eIF-2alpha/EIF2S1 and thus the shutoff of viral and cellular protein synthesis by directly interacting with EIF2AK2/PKR. Prevents stress granule formation in response to eIF-2alpha/EIF2S1 phosphorylation, thereby rescuing viral replication and protein synthesis. Also inhibits host autophagy by interacting with host Beclin-1/BECN1. The polypeptide is Protein TRS1 (TRS1) (Human cytomegalovirus (strain Merlin) (HHV-5)).